Reading from the N-terminus, the 632-residue chain is 1-deoxy-D-xylulose-5-phosphate synthase (632 aa).

The segment at 1-25 (MPTTFHEIPRKRPTTPLLDRANTPD) is disordered. Thiamine diphosphate is bound by residues His-87 and 128-130 (GHS). Asp-159 is a Mg(2+) binding site. Residues 160–161 (GA), Asn-188, Phe-295, and Glu-378 each bind thiamine diphosphate. Asn-188 contributes to the Mg(2+) binding site.

The protein belongs to the transketolase family. DXPS subfamily. In terms of assembly, homodimer. It depends on Mg(2+) as a cofactor. Thiamine diphosphate serves as cofactor.

The catalysed reaction is D-glyceraldehyde 3-phosphate + pyruvate + H(+) = 1-deoxy-D-xylulose 5-phosphate + CO2. The protein operates within metabolic intermediate biosynthesis; 1-deoxy-D-xylulose 5-phosphate biosynthesis; 1-deoxy-D-xylulose 5-phosphate from D-glyceraldehyde 3-phosphate and pyruvate: step 1/1. In terms of biological role, catalyzes the acyloin condensation reaction between C atoms 2 and 3 of pyruvate and glyceraldehyde 3-phosphate to yield 1-deoxy-D-xylulose-5-phosphate (DXP). This is 1-deoxy-D-xylulose-5-phosphate synthase from Pseudomonas fluorescens (strain Pf0-1).